Reading from the N-terminus, the 578-residue chain is Rhamnogalacturonate lyase (578 aa).

A signal peptide spans 1-27; sequence MHMNKPLQAWRTPLLTLIFVLPLTATG.

Belongs to the polysaccharide lyase 4 family.

The protein localises to the secreted. The catalysed reaction is Endotype eliminative cleavage of L-alpha-rhamnopyranosyl-(1-&gt;4)-alpha-D-galactopyranosyluronic acid bonds of rhamnogalacturonan I domains in ramified hairy regions of pectin leaving L-rhamnopyranose at the reducing end and 4-deoxy-4,5-unsaturated D-galactopyranosyluronic acid at the non-reducing end.. Degrades the rhamnogalacturonan I (RG-I) backbone of pectin. Is required for the full virulence of E.chrysanthemi strain 3937 as it is involved in rotting of plant tissue. The polypeptide is Rhamnogalacturonate lyase (rhiE) (Dickeya dadantii (strain 3937) (Erwinia chrysanthemi (strain 3937))).